The following is a 130-amino-acid chain: Histone H2A (130 aa).

Residues Lys-4 and Lys-7 each carry the N6-acetyllysine modification. Gln-105 is modified (N5-methylglutamine). A Phosphoserine modification is found at Ser-127. A [ST]-Q motif motif is present at residues 127–128 (SQ).

It belongs to the histone H2A family. As to quaternary structure, the nucleosome is a histone octamer containing two molecules each of H2A, H2B, H3 and H4 assembled in one H3-H4 heterotetramer and two H2A-H2B heterodimers. The octamer wraps approximately 147 bp of DNA. Phosphorylated to form H2AS128ph (gamma-H2A) in response to DNA double-strand breaks (DSBs) generated by exogenous genotoxic agents and by stalled replication forks. Phosphorylation is dependent on the DNA damage checkpoint kinases MEC1/ATR and TEL1/ATM, spreads on either side of a detected DSB site and may mark the surrounding chromatin for recruitment of proteins required for DNA damage signaling and repair. Gamma-H2A is removed from the DNA prior to the strand invasion-primer extension step of the repair process and subsequently dephosphorylated by PPH3, a component of the histone H2A phosphatase complex (HTP-C). Dephosphorylation is necessary for efficient recovery from the DNA damage checkpoint. Post-translationally, acetylated by ESA1 to form H2AK4ac and H2AK7ac.

It localises to the nucleus. It is found in the chromosome. Core component of nucleosome which plays a central role in DNA double strand break (DSB) repair. Nucleosomes wrap and compact DNA into chromatin, limiting DNA accessibility to the cellular machineries which require DNA as a template. Histones thereby play a central role in transcription regulation, DNA repair, DNA replication and chromosomal stability. DNA accessibility is regulated via a complex set of post-translational modifications of histones, also called histone code, and nucleosome remodeling. The sequence is that of Histone H2A (HTA1) from Kluyveromyces lactis (strain ATCC 8585 / CBS 2359 / DSM 70799 / NBRC 1267 / NRRL Y-1140 / WM37) (Yeast).